A 319-amino-acid polypeptide reads, in one-letter code: Acetyl-coenzyme A carboxylase carboxyl transferase subunit alpha (319 aa).

A CoA carboxyltransferase C-terminal domain is found at 32–293; it reads NVDIEVRALE…KAVLLNELEA (262 aa).

Belongs to the AccA family. As to quaternary structure, acetyl-CoA carboxylase is a heterohexamer composed of biotin carboxyl carrier protein (AccB), biotin carboxylase (AccC) and two subunits each of ACCase subunit alpha (AccA) and ACCase subunit beta (AccD).

Its subcellular location is the cytoplasm. It carries out the reaction N(6)-carboxybiotinyl-L-lysyl-[protein] + acetyl-CoA = N(6)-biotinyl-L-lysyl-[protein] + malonyl-CoA. The protein operates within lipid metabolism; malonyl-CoA biosynthesis; malonyl-CoA from acetyl-CoA: step 1/1. In terms of biological role, component of the acetyl coenzyme A carboxylase (ACC) complex. First, biotin carboxylase catalyzes the carboxylation of biotin on its carrier protein (BCCP) and then the CO(2) group is transferred by the carboxyltransferase to acetyl-CoA to form malonyl-CoA. This Xylella fastidiosa (strain Temecula1 / ATCC 700964) protein is Acetyl-coenzyme A carboxylase carboxyl transferase subunit alpha.